The following is a 408-amino-acid chain: Imidazolonepropionase (408 aa).

Fe(3+) is bound by residues H73 and H75. Zn(2+) contacts are provided by H73 and H75. Residues R82, Y145, and H178 each contribute to the 4-imidazolone-5-propanoate site. Position 145 (Y145) interacts with N-formimidoyl-L-glutamate. Position 243 (H243) interacts with Fe(3+). H243 lines the Zn(2+) pocket. A 4-imidazolone-5-propanoate-binding site is contributed by Q246. Fe(3+) is bound at residue D318. A Zn(2+)-binding site is contributed by D318. N-formimidoyl-L-glutamate contacts are provided by N320 and G322. S323 lines the 4-imidazolone-5-propanoate pocket.

It belongs to the metallo-dependent hydrolases superfamily. HutI family. The cofactor is Zn(2+). Requires Fe(3+) as cofactor.

The protein resides in the cytoplasm. It carries out the reaction 4-imidazolone-5-propanoate + H2O = N-formimidoyl-L-glutamate. The protein operates within amino-acid degradation; L-histidine degradation into L-glutamate; N-formimidoyl-L-glutamate from L-histidine: step 3/3. Catalyzes the hydrolytic cleavage of the carbon-nitrogen bond in imidazolone-5-propanoate to yield N-formimidoyl-L-glutamate. It is the third step in the universal histidine degradation pathway. The chain is Imidazolonepropionase from Shewanella piezotolerans (strain WP3 / JCM 13877).